The chain runs to 385 residues: Centrosomal protein of 44 kDa (385 aa).

Residues Arg11–Thr192 form a binds with microtubules and centrioles region. Residues Leu126–Glu154 form a disordered region. Over residues Ser139–Glu154 the composition is skewed to polar residues. Residues Glu230–Lys271 are a coiled coil. Positions Ser303–Thr348 are disordered. Over residues Asp305–Ser314 the composition is skewed to low complexity. Over residues Asn316–Ala327 the composition is skewed to basic and acidic residues. Residues Ser332–Ser342 show a composition bias toward low complexity. Ser342 is modified (phosphoserine). Thr343 is subject to Phosphothreonine. A coiled-coil region spans residues Ser358 to Lys381.

Interacts with CROCC. Interacts with POC1B; the interaction is direct and recruits POC1B to centriolar microtubules. Binds to centriolar microtubules.

The protein resides in the cytoplasm. The protein localises to the cytoskeleton. It localises to the microtubule organizing center. Its subcellular location is the centrosome. It is found in the centriole. The protein resides in the spindle pole. The protein localises to the midbody. Functionally, centriole-enriched microtubule-binding protein involved in centriole biogenesis. In collaboration with CEP295 and POC1B, is required for the centriole-to-centrosome conversion by ensuring the formation of bona fide centriole wall. Functions as a linker component that maintains centrosome cohesion. Associates with CROCC and regulates its stability and localization to the centrosome. This is Centrosomal protein of 44 kDa (CEP44) from Bos taurus (Bovine).